The primary structure comprises 910 residues: Bifunctional glucose-6-phosphate 1-dehydrogenase/6-phosphogluconolactonase (910 aa).

The tract at residues 1–170 (MDYENFVKSA…DFHIASLFPN (170 aa)) is 6-phosphogluconolactonase. The interval 171-276 (IFYNIYMNNY…PATYLIDTSC (106 aa)) is linker. The tract at residues 277 to 910 (TNENVNINNN…FYEDDLLDIN (634 aa)) is glucose-6-phosphate 1-dehydrogenase. Residues 345–352 (GCSGDLAK), Arg379, and Lys548 each bind NADP(+). D-glucose 6-phosphate contacts are provided by residues Lys548, 578–582 (HYLGK), Glu616, and Asp635. The Proton acceptor role is filled by His640. The segment at 689 to 711 (ENFKEDENNDDESKKNHSYHDDP) is disordered. Lys742 serves as a coordination point for NADP(+). Residue Lys745 participates in D-glucose 6-phosphate binding. Arg755 contacts NADP(+). Gln779 serves as a coordination point for D-glucose 6-phosphate. 785–787 (YLK) lines the NADP(+) pocket.

In the N-terminal section; belongs to the glucosamine/galactosamine-6-phosphate isomerase family. 6-phosphogluconolactonase subfamily. It in the C-terminal section; belongs to the glucose-6-phosphate dehydrogenase family. In terms of assembly, homotetramer.

It carries out the reaction 6-phospho-D-glucono-1,5-lactone + H2O = 6-phospho-D-gluconate + H(+). The catalysed reaction is D-glucose 6-phosphate + NADP(+) = 6-phospho-D-glucono-1,5-lactone + NADPH + H(+). It functions in the pathway carbohydrate degradation; pentose phosphate pathway; D-ribulose 5-phosphate from D-glucose 6-phosphate (oxidative stage): step 1/3. The protein operates within carbohydrate degradation; pentose phosphate pathway; D-ribulose 5-phosphate from D-glucose 6-phosphate (oxidative stage): step 2/3. With respect to regulation, G6PD activity is inhibited by glucosamine-6-phosphate, NADPH, and 4-(4-bromophenyl)-7-(3,4-dimethoxyphenyl)-4,6,7,8-tetrahydroquinoline-2,5(1 H,3H)-dione. G6PD and 6PGL activities can be reversibly inhibited by S-glutathionylation (in vitro). In terms of biological role, bifunctional enzyme which catalyzes the first two steps of the oxidative pentose-phosphate pathway, which represents a route for the dissimilation of carbohydrates besides glycolysis. The main function of this enzyme is to provide reducing power (NADPH) and pentose phosphates for fatty acid and nucleic acid synthesis. The chain is Bifunctional glucose-6-phosphate 1-dehydrogenase/6-phosphogluconolactonase from Plasmodium falciparum (isolate 3D7).